We begin with the raw amino-acid sequence, 139 residues long: Ribosome-binding factor A (139 aa).

The segment at 112–139 is disordered; that stretch reads EARTQGQAAPAPDVEPAPGAAPDDEAEE. Over residues 119 to 132 the composition is skewed to low complexity; that stretch reads AAPAPDVEPAPGAA.

Belongs to the RbfA family. As to quaternary structure, monomer. Binds 30S ribosomal subunits, but not 50S ribosomal subunits or 70S ribosomes.

The protein localises to the cytoplasm. Functionally, one of several proteins that assist in the late maturation steps of the functional core of the 30S ribosomal subunit. Associates with free 30S ribosomal subunits (but not with 30S subunits that are part of 70S ribosomes or polysomes). Required for efficient processing of 16S rRNA. May interact with the 5'-terminal helix region of 16S rRNA. This Anaeromyxobacter dehalogenans (strain 2CP-1 / ATCC BAA-258) protein is Ribosome-binding factor A.